A 111-amino-acid polypeptide reads, in one-letter code: uncharacterized protein (111 aa).

3 consecutive transmembrane segments (helical) span residues 22-42 (ASLI…ANIT), 48-68 (LTPA…VSVL), and 75-95 (VLVT…PKIL).

It is found in the membrane. This is an uncharacterized protein from Saccharomyces cerevisiae (strain ATCC 204508 / S288c) (Baker's yeast).